The primary structure comprises 99 residues: Protein translation factor SUI1 homolog (99 aa).

The protein belongs to the SUI1 family.

This is Protein translation factor SUI1 homolog from Sulfolobus acidocaldarius (strain ATCC 33909 / DSM 639 / JCM 8929 / NBRC 15157 / NCIMB 11770).